The primary structure comprises 261 residues: Phosphonates import ATP-binding protein PhnC (261 aa).

Positions 9–253 constitute an ABC transporter domain; it reads IQLKDVSKIY…VFDDIYNGGN (245 aa). 42 to 49 serves as a coordination point for ATP; it reads GLSGAGKS.

It belongs to the ABC transporter superfamily. Phosphonates importer (TC 3.A.1.9.1) family. As to quaternary structure, the complex is composed of two ATP-binding proteins (PhnC), two transmembrane proteins (PhnE) and a solute-binding protein (PhnD).

It localises to the cell membrane. The enzyme catalyses phosphonate(out) + ATP + H2O = phosphonate(in) + ADP + phosphate + H(+). Part of the ABC transporter complex PhnCDE involved in phosphonates import. Responsible for energy coupling to the transport system. This Lactobacillus gasseri (strain ATCC 33323 / DSM 20243 / BCRC 14619 / CIP 102991 / JCM 1131 / KCTC 3163 / NCIMB 11718 / NCTC 13722 / AM63) protein is Phosphonates import ATP-binding protein PhnC.